A 233-amino-acid polypeptide reads, in one-letter code: Purine nucleoside phosphorylase DeoD-type (233 aa).

H4 is a binding site for a purine D-ribonucleoside. Residues G20, R24, R43, and 87–90 (RIGT) each bind phosphate. A purine D-ribonucleoside is bound by residues 179–181 (EME) and 203–204 (SD). The active-site Proton donor is the D204.

The protein belongs to the PNP/UDP phosphorylase family. As to quaternary structure, homohexamer; trimer of homodimers.

The catalysed reaction is a purine D-ribonucleoside + phosphate = a purine nucleobase + alpha-D-ribose 1-phosphate. It carries out the reaction a purine 2'-deoxy-D-ribonucleoside + phosphate = a purine nucleobase + 2-deoxy-alpha-D-ribose 1-phosphate. In terms of biological role, catalyzes the reversible phosphorolytic breakdown of the N-glycosidic bond in the beta-(deoxy)ribonucleoside molecules, with the formation of the corresponding free purine bases and pentose-1-phosphate. This is Purine nucleoside phosphorylase DeoD-type from Helicobacter pylori (strain ATCC 700392 / 26695) (Campylobacter pylori).